A 511-amino-acid polypeptide reads, in one-letter code: Probable pectinesterase/pectinesterase inhibitor 17 (511 aa).

Positions 1 to 23 (MMAFRAYIINFVILCILVASTVS) are cleaved as a signal peptide. Residues 24–171 (GYNQKDVKAW…SNLLCNTLAI (148 aa)) are pectinesterase inhibitor 17. N-linked (GlcNAc...) asparagine glycans are attached at residues asparagine 112 and asparagine 160. The segment at 237–414 (VKQGVYSENL…LRPVLGSTKT (178 aa)) is pectinesterase 17. The substrate site is built by threonine 277 and glutamine 307. Catalysis depends on aspartate 330, which acts as the Proton donor; for pectinesterase activity. A disulfide bridge links cysteine 344 with cysteine 364. The active-site Nucleophile; for pectinesterase activity is aspartate 351. Positions 418 and 420 each coordinate substrate.

It in the N-terminal section; belongs to the PMEI family. The protein in the C-terminal section; belongs to the pectinesterase family. Expressed in siliques.

It localises to the secreted. It is found in the cell wall. The enzyme catalyses [(1-&gt;4)-alpha-D-galacturonosyl methyl ester](n) + n H2O = [(1-&gt;4)-alpha-D-galacturonosyl](n) + n methanol + n H(+). The protein operates within glycan metabolism; pectin degradation; 2-dehydro-3-deoxy-D-gluconate from pectin: step 1/5. Its function is as follows. Acts in the modification of cell walls via demethylesterification of cell wall pectin. This chain is Probable pectinesterase/pectinesterase inhibitor 17 (PME17), found in Arabidopsis thaliana (Mouse-ear cress).